The primary structure comprises 596 residues: MKQIRNFSIIAHIDHGKSTLSDRLIQVCGGLTDREMDAQVLDSMDLERERGITIKAQSVTLDYKAKDGLVYQLNFIDTPGHVDFSYEVSRSLAACEGALLVVDAGQGVEAQTLANCYTALDMNLDVVPILNKIDLPQADPERVAAEIEDIVGIDAIDAVRCSAKTGVGVDEVLEVIVAKIPPPEGDPNAPLQALIIDSWFDNYLGVVSLVRIKHGSLKKGDKFKVMSTGQNHTADRVGIFTPKQTDKTELKTGEVGFVIAGLKEIHGAPVGDTLTLAKNGAEKPLPGFKKVKPQVYAGVFPISTDEYENFRDALNKLSLNDASLFFEPESSSALGFGFRIGYLGLLHMEIVQERLEREYNLELITTAPTVVYEVVMTSGETIYVDNPSDLPAINNIEEMREPIVEANILVPKEYLGNVITLCIEKRGTQVNMVYHGNQVAVTYHLPMAEVVMDFFDRLKSTSRGYASLEYNFIRFDPADMVRLDILINGDRVDALAMVIHRSNIRHRGLALVDKMKELIPRQMFDIAIQAAVGSQIIARSTVKALRKDVTAKCYGGDVSRKKKLLNKQKEGKKRMKQVGNVEVPQEAFLAVLKLNE.

Residues 2–184 form the tr-type G domain; the sequence is KQIRNFSIIA…VIVAKIPPPE (183 aa). GTP contacts are provided by residues 14–19 and 131–134; these read DHGKST and NKID.

Belongs to the TRAFAC class translation factor GTPase superfamily. Classic translation factor GTPase family. LepA subfamily.

The protein localises to the cell inner membrane. It carries out the reaction GTP + H2O = GDP + phosphate + H(+). Required for accurate and efficient protein synthesis under certain stress conditions. May act as a fidelity factor of the translation reaction, by catalyzing a one-codon backward translocation of tRNAs on improperly translocated ribosomes. Back-translocation proceeds from a post-translocation (POST) complex to a pre-translocation (PRE) complex, thus giving elongation factor G a second chance to translocate the tRNAs correctly. Binds to ribosomes in a GTP-dependent manner. The protein is Elongation factor 4 of Shewanella baltica (strain OS223).